Here is a 253-residue protein sequence, read N- to C-terminus: uncharacterized protein (253 aa).

2 consecutive C2HC LYAR-type zinc fingers follow at residues 1–26 and 27–51; these read MVFFSCNNCGEACKKNQVERHLFQCR and NTTFSCIDCQLVYTRETYKDHVKCI. Zn(2+) contacts are provided by Cys-6, Cys-9, His-21, Cys-25, Cys-32, Cys-35, His-47, and Cys-50. Positions 136 to 171 form a coiled coil; the sequence is AAEADKMREEAIRKQEETQKMEKAQKEAAAAAKKET.

It localises to the nucleus. This is an uncharacterized protein from Caenorhabditis elegans.